A 309-amino-acid chain; its full sequence is MKHGILVAYKPKGPTSHDVVDEVRKKLKTRKVGHGGTLDPFACGVLIIGVNQGTRILEFYKDLKKVYWVKMRLGLITETFDITGEVVEERECNATEEEIREAIFSFVGEYDQVPPAYSAKKHKGERLYKLAREGKIINLPPKRVKIFKIWDVNVEGRDVSFRAEVSPGTYIRSLCMDIGYKLGCGATAVELVRESVGSYTIEESLNVFEAAPEEIENRIIPLEKCLEWLPRVVVHQESTKTILNGSQIHLEMLKEWDGFKKGEVVRVFNEEGRLLALAEAERNSSFLETLRKHERNERVLTLRKVFNTR.

Asp-39 serves as the catalytic Nucleophile. Positions 229–306 constitute a PUA domain; it reads LPRVVVHQES…ERVLTLRKVF (78 aa).

The protein belongs to the pseudouridine synthase TruB family. Type 1 subfamily.

The catalysed reaction is uridine(55) in tRNA = pseudouridine(55) in tRNA. Its function is as follows. Responsible for synthesis of pseudouridine from uracil-55 in the psi GC loop of transfer RNAs. The sequence is that of tRNA pseudouridine synthase B from Thermotoga petrophila (strain ATCC BAA-488 / DSM 13995 / JCM 10881 / RKU-1).